The following is a 392-amino-acid chain: Protein RecA (392 aa).

A disordered region spans residues 1 to 21 (MALETKPAQDPATEIKHELDP). 83 to 90 (GPESSGKT) is an ATP binding site. A disordered region spans residues 372–392 (DAAKDTKATAAPAAKSSRAKA). Residues 379 to 392 (ATAAPAAKSSRAKA) are compositionally biased toward low complexity.

Belongs to the RecA family.

It is found in the cytoplasm. Its function is as follows. Can catalyze the hydrolysis of ATP in the presence of single-stranded DNA, the ATP-dependent uptake of single-stranded DNA by duplex DNA, and the ATP-dependent hybridization of homologous single-stranded DNAs. It interacts with LexA causing its activation and leading to its autocatalytic cleavage. This Bifidobacterium breve protein is Protein RecA.